The following is a 147-amino-acid chain: Hemoglobin subunit gamma (147 aa).

One can recognise a Globin domain in the interval 3 to 147 (NFTAEDKAAI…VASALASRYH (145 aa)). Positions 64 and 93 each coordinate heme b.

It belongs to the globin family. Heterotetramer of two alpha chains and two gamma chains in fetal hemoglobin (Hb F). As to expression, red blood cells.

Functionally, gamma chains make up the fetal hemoglobin F, in combination with alpha chains. This chain is Hemoglobin subunit gamma (HBG), found in Alouatta belzebul (Red-handed howler monkey).